The chain runs to 560 residues: MKVWMAILISILCWQSSAWAVCPAWSPARAQEEISRLQQQIKQWDDDYWKEGKSEVEDGVYDQLSARLTQWQRCFGNETPDVMMPPLNGAVIHPVAHTGVRKMADKIALSLWMRERSDLWVQPKVDGVAVTLVYRDGKLNKAISRGNGLKGEDWTQKVRLISAVPQTVSGPLANSTLQGEIFLKREGHIQQQMGGINARAKVAGLMMRQDDSDTLNSLGVFVWAWPDGPQLMTDRLKELATAGFTLTQTYTRAVKNADEVARVRNAWWKAKLPFVTDGVVVRAAKEPESRHWLPGQAEWLVAWKYQPVAQVAEVKTIQFAVGKSGKISVVASLAPVMLDDKKVQRVNIGSVRRWQEWDIAPGDQILVSLAGQGIPRIDDVVWRGAERTKPTPPENRFNSLTCYFASDVCQEQFISRLVWLGSKQVLGLDGIGEAGWRALHQTHRFEHIFSWLLLTPEQLQNTPGIAKSKSAQLWHQFNLARKQPFTRWVMAMGIPLTRAALNASDERSWSQLLLSTEQFWQQLPGTGSGRARQVIEWKENAQIKKLGSWLAAQQITGFEP.

The active-site N6-AMP-lysine intermediate is K124.

This sequence belongs to the NAD-dependent DNA ligase family. LigB subfamily.

The enzyme catalyses NAD(+) + (deoxyribonucleotide)n-3'-hydroxyl + 5'-phospho-(deoxyribonucleotide)m = (deoxyribonucleotide)n+m + AMP + beta-nicotinamide D-nucleotide.. Its function is as follows. Catalyzes the formation of phosphodiester linkages between 5'-phosphoryl and 3'-hydroxyl groups in double-stranded DNA using NAD as a coenzyme and as the energy source for the reaction. The protein is DNA ligase B of Escherichia coli O17:K52:H18 (strain UMN026 / ExPEC).